Reading from the N-terminus, the 300-residue chain is L-arabinolactonase (300 aa).

A divalent metal cation is bound by residues Glu22, Asn156, and Asp205.

It belongs to the SMP-30/CGR1 family. The cofactor is a divalent metal cation.

It carries out the reaction L-arabinono-1,4-lactone + H2O = L-arabinonate + H(+). Functionally, catalyzes the cleavage of L-arabino-gamma-lactone to L-arabonate. Is involved in a degradation pathway of L-arabinose that allows A.brasilense to grow on L-arabinose as a sole carbon source. Can also use D-galactono-1,4-lactone as substrate in vitro; however, the enzyme is probably not involved in the metabolism of D-galactose in vivo. This is L-arabinolactonase (araB) from Azospirillum brasilense.